The following is a 430-amino-acid chain: Phosphoribosylamine--glycine ligase (430 aa).

The region spanning lysine 109–asparagine 316 is the ATP-grasp domain. An ATP-binding site is contributed by valine 135 to serine 196. Mg(2+) contacts are provided by glutamate 286 and asparagine 288.

The protein belongs to the GARS family. The cofactor is Mg(2+). Mn(2+) is required as a cofactor.

The catalysed reaction is 5-phospho-beta-D-ribosylamine + glycine + ATP = N(1)-(5-phospho-beta-D-ribosyl)glycinamide + ADP + phosphate + H(+). It functions in the pathway purine metabolism; IMP biosynthesis via de novo pathway; N(1)-(5-phospho-D-ribosyl)glycinamide from 5-phospho-alpha-D-ribose 1-diphosphate: step 2/2. This is Phosphoribosylamine--glycine ligase from Xylella fastidiosa (strain Temecula1 / ATCC 700964).